Reading from the N-terminus, the 412-residue chain is Putative gustatory receptor 58c (412 aa).

2 helical membrane-spanning segments follow: residues 39–59 (VVYCVILNVVYLLVLPFALFV) and 72–92 (MFGVVYNVVALTKLLTMLFLM). N158 carries N-linked (GlcNAc...) asparagine glycosylation. A helical transmembrane segment spans residues 173–193 (IVYALIMILLMSYVDMTVYMV). N203 carries N-linked (GlcNAc...) asparagine glycosylation. 3 helical membrane passes run 224-241 (IPREMGLMQILAAWRKLW), 262-282 (VLFNLLTTYIFSIAVLFRLWI), and 296-316 (ILYAIIFLTHHVEIVMQFSIF). N-linked (GlcNAc...) asparagine glycosylation is found at N337, N386, and N391.

Belongs to the insect chemoreceptor superfamily. Gustatory receptor (GR) family. Gr10a subfamily.

The protein localises to the cell membrane. In terms of biological role, probable gustatory receptor which mediates acceptance or avoidance behavior, depending on its substrates. This Drosophila melanogaster (Fruit fly) protein is Putative gustatory receptor 58c (Gr58c).